We begin with the raw amino-acid sequence, 148 residues long: uncharacterized protein (148 aa).

This is an uncharacterized protein from Bacillus subtilis (strain 168).